The chain runs to 306 residues: Mitochondrial brown fat uncoupling protein 1 (306 aa).

Topologically, residues methionine 1 to proline 10 are mitochondrial intermembrane. Residues proline 11 to phenylalanine 32 traverse the membrane as a helical segment. Solcar repeat units follow at residues proline 11–phenylalanine 102, proline 110–alanine 200, and aspartate 209–glutamate 294. At proline 33–lysine 73 the chain is on the mitochondrial matrix side. A fatty acid 16:0-binding site is contributed by lysine 56. The helical transmembrane segment at leucine 74 to tyrosine 96 threads the bilayer. The Mitochondrial intermembrane portion of the chain corresponds to aspartate 97–lysine 115. The chain crosses the membrane as a helical span at residues isoleucine 116–proline 132. Topologically, residues threonine 133 to threonine 177 are mitochondrial matrix. The helical transmembrane segment at proline 178–tyrosine 194 threads the bilayer. Residues aspartate 195–valine 211 are Mitochondrial intermembrane-facing. Residues proline 212–proline 231 form a helical membrane-spanning segment. Over valine 232–alanine 265 the chain is Mitochondrial matrix. Cysteine 253 is modified (cysteine sulfenic acid (-SOH)). The helical transmembrane segment at phenylalanine 266 to phenylalanine 288 threads the bilayer. Fatty acid 16:0 is bound at residue lysine 268. The Mitochondrial intermembrane portion of the chain corresponds to glutamate 289–threonine 306.

This sequence belongs to the mitochondrial carrier (TC 2.A.29) family. As to quaternary structure, most probably functions as a monomer. Binds one purine nucleotide per monomer. However, has also been suggested to function as a homodimer or a homotetramer. Tightly associates with cardiolipin in the mitochondrion inner membrane; may stabilize and regulate its activity. Post-translationally, may undergo sulfenylation upon cold exposure. May increase the sensitivity of UCP1 thermogenic function to the activation by noradrenaline probably through structural effects. In terms of processing, may undergo ubiquitin-mediated proteasomal degradation. As to expression, brown adipose tissue.

It localises to the mitochondrion inner membrane. It catalyses the reaction H(+)(in) = H(+)(out). Its activity is regulated as follows. Has no constitutive proton transporter activity and has to be activated by long-chain fatty acids/LCFAs. Inhibited by purine nucleotides. Both purine nucleotides and LCFAs bind the cytosolic side of the transporter and directly compete to activate or inhibit it. Activated by noradrenaline and reactive oxygen species. Despite lacking canonical translational encoding for selenocysteine, a small pool of the protein has been observed to selectively incorporate selenocysteine at 'Cys-253'. Selenocysteine-modified protein is highly sensitive to redox modification and may constitute a pool of protein highly sensitive to activation by elevated levels of reactive oxygen species (ROS). Mitochondrial protein responsible for thermogenic respiration, a specialized capacity of brown adipose tissue and beige fat that participates in non-shivering adaptive thermogenesis to temperature and diet variations and more generally to the regulation of energy balance. Functions as a long-chain fatty acid/LCFA and proton symporter, simultaneously transporting one LCFA and one proton through the inner mitochondrial membrane. However, LCFAs remaining associated with the transporter via their hydrophobic tails, it results in an apparent transport of protons activated by LCFAs. Thereby, dissipates the mitochondrial proton gradient and converts the energy of substrate oxydation into heat instead of ATP. Regulates the production of reactive oxygen species/ROS by mitochondria. The sequence is that of Mitochondrial brown fat uncoupling protein 1 from Oryctolagus cuniculus (Rabbit).